The sequence spans 83 residues: Acylphosphatase (83 aa).

In terms of domain architecture, Acylphosphatase-like spans 1–83 (MIEGRVQRVG…TGDDWFEVRY (83 aa)). Residues Arg12 and Asn30 contribute to the active site.

This sequence belongs to the acylphosphatase family.

It catalyses the reaction an acyl phosphate + H2O = a carboxylate + phosphate + H(+). In Synechococcus sp. (strain CC9605), this protein is Acylphosphatase (acyP).